Consider the following 61-residue polypeptide: Probable tautomerase SERP0934 (61 aa).

Proline 2 acts as the Proton acceptor; via imino nitrogen in catalysis.

This sequence belongs to the 4-oxalocrotonate tautomerase family.

The chain is Probable tautomerase SERP0934 from Staphylococcus epidermidis (strain ATCC 35984 / DSM 28319 / BCRC 17069 / CCUG 31568 / BM 3577 / RP62A).